Reading from the N-terminus, the 165-residue chain is Ureidoglycolate lyase (165 aa).

Belongs to the ureidoglycolate lyase family. Homodimer. It depends on Ni(2+) as a cofactor.

It catalyses the reaction (S)-ureidoglycolate = urea + glyoxylate. It participates in nitrogen metabolism; (S)-allantoin degradation. Its function is as follows. Catalyzes the catabolism of the allantoin degradation intermediate (S)-ureidoglycolate, generating urea and glyoxylate. Involved in the utilization of allantoin as nitrogen source. This is Ureidoglycolate lyase from Chelativorans sp. (strain BNC1).